The primary structure comprises 222 residues: Cytidylate kinase (222 aa).

9-17 serves as a coordination point for ATP; it reads GPAGSGKTT.

The protein belongs to the cytidylate kinase family. Type 1 subfamily.

The protein resides in the cytoplasm. The catalysed reaction is CMP + ATP = CDP + ADP. The enzyme catalyses dCMP + ATP = dCDP + ADP. The sequence is that of Cytidylate kinase from Thermosipho africanus (strain TCF52B).